Reading from the N-terminus, the 741-residue chain is Cellulose 1,4-beta-cellobiosidase (reducing end) CelS (741 aa).

An N-terminal signal peptide occupies residues 1 to 27 (MVKSRKISILLAVAMLVSIMIPTTAFA). Residue glutamate 76 participates in substrate binding. Glutamate 87 (proton donor) is an active-site residue. Substrate-binding positions include threonine 140, asparagine 204, aspartate 241, glutamine 247, and 251–252 (TN). Aspartate 255 acts as the Nucleophile in catalysis. Residues 301-302 (KY), 326-327 (WY), tyrosine 421, aspartate 520, and 645-646 (WH) contribute to the substrate site. Residues 673 to 739 (STKLYGDVND…ILKEIDTLPY (67 aa)) form the Dockerin domain. Positions 679, 681, 683, 684, 685, 690, 711, 712, 713, 715, 717, and 722 each coordinate Ca(2+).

It belongs to the glycosyl hydrolase 48 (cellulase L) family.

The protein localises to the secreted. It carries out the reaction Hydrolysis of (1-&gt;4)-beta-D-glucosidic linkages in cellulose and similar substrates, releasing cellobiose from the reducing ends of the chains.. Its activity is regulated as follows. Inhibited by cellobiose and lactose, but not by glucose. Functionally, this enzyme catalyzes the exohydrolysis of 1,4-beta-glucosidic linkages in cellulose with a preference for amorphous or crystalline cellulose over carboxymethyl cellulose. This chain is Cellulose 1,4-beta-cellobiosidase (reducing end) CelS (celS), found in Acetivibrio thermocellus (strain ATCC 27405 / DSM 1237 / JCM 9322 / NBRC 103400 / NCIMB 10682 / NRRL B-4536 / VPI 7372) (Clostridium thermocellum).